The following is a 508-amino-acid chain: Flavonoid 3',5'-hydroxylase 2 (508 aa).

Cys-443 contacts heme.

Belongs to the cytochrome P450 family. Heme serves as cofactor. In terms of tissue distribution, flowers.

It localises to the microsome. The protein resides in the endoplasmic reticulum. The catalysed reaction is a 3',5'-unsubstituted flavanone + 2 reduced [NADPH--hemoprotein reductase] + 2 O2 = a 3',5'-dihydroxyflavanone + 2 oxidized [NADPH--hemoprotein reductase] + 2 H2O + 2 H(+). It functions in the pathway pigment biosynthesis; anthocyanin biosynthesis. Catalyzes the 3'5'-hydroxylation of naringenin and eriodictyol to form 5,7,3,'4',5'-pentahydroxyflavanone and 3',5'-hydroxylation of dihydrokaempferol and dihydroquercetin to form dihydromyricetin. The protein is Flavonoid 3',5'-hydroxylase 2 (CYP75A3) of Petunia hybrida (Petunia).